The primary structure comprises 1633 residues: Serine-aspartate repeat-containing protein F (1633 aa).

A signal peptide spans 1–45 (MKKRRQGPINKRVDFLSNKVNKYSIRKFTVGTASILVGATLMFGA). Residues 46–678 (ADNEAKAAED…GSSTAQGDNP (633 aa)) form a ligand binding A region region. The tract at residues 51–269 (KAAEDNQLES…SISTDSSVND (219 aa)) is disordered. Residues 61–74 (ASKEEQKGSRDNES) are compositionally biased toward basic and acidic residues. Composition is skewed to polar residues over residues 85-99 (GSHS…NNAT) and 146-168 (PKTS…DNLN). Over residues 175–184 (KESKTDEHST) the composition is skewed to basic and acidic residues. Positions 186–226 (QAQMSTNKSNLDTNDSPTQSEKTSSQANNDSTDNQSAPSKQ) are enriched in polar residues. The segment covering 227–253 (LDSKPSEQKVYKTKFNDEPTQDVEHTT) has biased composition (basic and acidic residues). Positions 255–266 (KLKTPSISTDSS) are enriched in polar residues. 4 consecutive CNA-B domains span residues 679–797 (TYSL…YLTP), 798–907 (KYNV…FYKP), 908–1018 (IYNL…YKTP), and 1019–1129 (KYSV…FDDD). A type I collagen binding region region spans residues 679-1129 (TYSLGDYVWL…SIDNGYFDDD (451 aa)). The segment at 862 to 889 (FETPEGYTPTKQNSGSDEGKDSNGTKTT) is disordered. The interval 1085-1608 (KPEGMTQTTA…ANEDHDSKGT (524 aa)) is disordered. Positions 1107–1119 (EDVRVTITDHDDF) are enriched in basic and acidic residues. The span at 1125 to 1584 (YFDDDSDSDS…DSDSDSDSDS (460 aa)) shows a compositional bias: acidic residues. A compositionally biased stretch (basic and acidic residues) spans 1585-1606 (DSDKNAKDKLPDTGANEDHDSK). The short motif at 1594 to 1598 (LPDTG) is the LPXTG sorting signal element. T1597 is modified (pentaglycyl murein peptidoglycan amidated threonine). A propeptide spans 1598–1633 (GANEDHDSKGTLLGTLFAGLGALLLGRRRKKDNKEK) (removed by sortase).

Belongs to the serine-aspartate repeat-containing protein (SDr) family.

The protein localises to the secreted. It is found in the cell wall. Binds to type I collagen via alpha-2(I) or alpha-1(I) chains. The sequence is that of Serine-aspartate repeat-containing protein F (sdrF) from Staphylococcus epidermidis (strain ATCC 12228 / FDA PCI 1200).